A 467-amino-acid chain; its full sequence is 3-isopropylmalate dehydratase large subunit (467 aa).

Residues cysteine 347, cysteine 407, and cysteine 410 each coordinate [4Fe-4S] cluster.

It belongs to the aconitase/IPM isomerase family. LeuC type 1 subfamily. In terms of assembly, heterodimer of LeuC and LeuD. [4Fe-4S] cluster serves as cofactor.

The catalysed reaction is (2R,3S)-3-isopropylmalate = (2S)-2-isopropylmalate. It functions in the pathway amino-acid biosynthesis; L-leucine biosynthesis; L-leucine from 3-methyl-2-oxobutanoate: step 2/4. In terms of biological role, catalyzes the isomerization between 2-isopropylmalate and 3-isopropylmalate, via the formation of 2-isopropylmaleate. The chain is 3-isopropylmalate dehydratase large subunit from Synechococcus sp. (strain JA-2-3B'a(2-13)) (Cyanobacteria bacterium Yellowstone B-Prime).